The chain runs to 120 residues: Glycine cleavage system H protein (120 aa).

The region spanning 17 to 99 is the Lipoyl-binding domain; it reads VATVGITAHA…QGDGWLYRLK (83 aa). At Lys58 the chain carries N6-lipoyllysine.

It belongs to the GcvH family. As to quaternary structure, the glycine cleavage system is composed of four proteins: P, T, L and H. (R)-lipoate is required as a cofactor.

Its function is as follows. The glycine cleavage system catalyzes the degradation of glycine. The H protein shuttles the methylamine group of glycine from the P protein to the T protein. This chain is Glycine cleavage system H protein, found in Methylorubrum extorquens (strain PA1) (Methylobacterium extorquens).